A 345-amino-acid chain; its full sequence is DNA primase small subunit PriS (345 aa).

Residues Asp-95 and Asp-97 contribute to the active site. Zn(2+)-binding residues include Cys-106, His-108, Cys-114, and Cys-117. The short motif at 106 to 117 is the Zinc knuckle motif element; that stretch reads CNHEPGKVCPIC. The active site involves Asp-280.

This sequence belongs to the eukaryotic-type primase small subunit family. Heterodimer of a small subunit (PriS) and a large subunit (PriL). It depends on Mg(2+) as a cofactor. Mn(2+) is required as a cofactor.

Catalytic subunit of DNA primase, an RNA polymerase that catalyzes the synthesis of short RNA molecules used as primers for DNA polymerase during DNA replication. The small subunit contains the primase catalytic core and has DNA synthesis activity on its own, synthesizing DNA strands up to 3 kB. Binding to the large subunit stabilizes and modulates the activity, increasing the rate of DNA synthesis while decreasing the length of the DNA fragments, and conferring RNA synthesis capability for RNA fragments up to 150 bases. The DNA polymerase activity may enable DNA primase to also catalyze primer extension after primer synthesis. May also play a role in DNA repair. Displays gap-filling and strand-displacement activities. This chain is DNA primase small subunit PriS, found in Pyrococcus abyssi (strain GE5 / Orsay).